The primary structure comprises 330 residues: Aspartate--ammonia ligase (330 aa).

It belongs to the class-II aminoacyl-tRNA synthetase family. AsnA subfamily.

It localises to the cytoplasm. The enzyme catalyses L-aspartate + NH4(+) + ATP = L-asparagine + AMP + diphosphate + H(+). It participates in amino-acid biosynthesis; L-asparagine biosynthesis; L-asparagine from L-aspartate (ammonia route): step 1/1. This is Aspartate--ammonia ligase from Streptococcus pneumoniae serotype 19F (strain G54).